A 252-amino-acid chain; its full sequence is Triosephosphate isomerase (252 aa).

10 to 12 serves as a coordination point for substrate; it reads NWK. H96 functions as the Electrophile in the catalytic mechanism. The active-site Proton acceptor is E168. Substrate is bound by residues G174, S214, and 235–236; that span reads GG.

Belongs to the triosephosphate isomerase family. In terms of assembly, homodimer.

The protein localises to the cytoplasm. It catalyses the reaction D-glyceraldehyde 3-phosphate = dihydroxyacetone phosphate. The protein operates within carbohydrate biosynthesis; gluconeogenesis. It participates in carbohydrate degradation; glycolysis; D-glyceraldehyde 3-phosphate from glycerone phosphate: step 1/1. Functionally, involved in the gluconeogenesis. Catalyzes stereospecifically the conversion of dihydroxyacetone phosphate (DHAP) to D-glyceraldehyde-3-phosphate (G3P). The sequence is that of Triosephosphate isomerase from Streptococcus gordonii (strain Challis / ATCC 35105 / BCRC 15272 / CH1 / DL1 / V288).